The sequence spans 876 residues: Alanine--tRNA ligase (876 aa).

Zn(2+) is bound by residues His-565, His-569, Cys-667, and His-671.

Belongs to the class-II aminoacyl-tRNA synthetase family. The cofactor is Zn(2+).

It is found in the cytoplasm. The catalysed reaction is tRNA(Ala) + L-alanine + ATP = L-alanyl-tRNA(Ala) + AMP + diphosphate. In terms of biological role, catalyzes the attachment of alanine to tRNA(Ala) in a two-step reaction: alanine is first activated by ATP to form Ala-AMP and then transferred to the acceptor end of tRNA(Ala). Also edits incorrectly charged Ser-tRNA(Ala) and Gly-tRNA(Ala) via its editing domain. The sequence is that of Alanine--tRNA ligase from Staphylococcus epidermidis (strain ATCC 35984 / DSM 28319 / BCRC 17069 / CCUG 31568 / BM 3577 / RP62A).